We begin with the raw amino-acid sequence, 393 residues long: Dual specificity mitogen-activated protein kinase kinase 1 (393 aa).

A disordered region spans residues 1–27 (MPKKKPTPIQLNPAPDGSAVNGTSSAE). The 294-residue stretch at 68-361 (FEKISELGAG…LKQLMVHAFI (294 aa)) folds into the Protein kinase domain. ATP-binding positions include 74–82 (LGAGNGGVV) and lysine 97. Aspartate 190 acts as the Proton acceptor in catalysis. Phosphoserine; by RAF is present on residues serine 218 and serine 222. Residues 270–307 (ELELLFGCHVEGDAAETPPRPRTPGRPLSSYGMDSRPP) are RAF1-binding. Threonine 286 carries the phosphothreonine modification. A Phosphothreonine; by MAPK1 modification is found at threonine 292. Serine 298 carries the phosphoserine; by PAK modification.

Belongs to the protein kinase superfamily. STE Ser/Thr protein kinase family. MAP kinase kinase subfamily. In terms of assembly, found in a complex with at least BRAF, HRAS, MAP2K1, MAPK3/ERK1 and RGS14. Forms a heterodimer with MAP2K2/MEK2. Forms heterodimers with KSR2 which further dimerize to form tetramers. Interacts with KSR1 or KSR2 and BRAF; the interaction with KSR1 or KSR2 mediates KSR1-BRAF or KSR2-BRAF dimerization. Interacts with ARBB2, LAMTOR3, MAPK1/ERK2 and RAF1. Interacts with MAPK1/ERK2. Interacts with MORG1. Interacts with PPARG. Interacts with SGK1. Interacts with BIRC6/bruce. Interacts with KAT7; the interaction promotes KAT7 phosphorylation. Interacts with RAF1 and NEK10; the interaction is required for ERK1/2-signaling pathway activation in response to UV irradiation. Interacts with TRAF3IP3. Interacts with MOS. Post-translationally, phosphorylation at Ser-218 and Ser-222 by MAP kinase kinase kinases (BRAF or MEKK1) positively regulates kinase activity. Also phosphorylated at Thr-292 by MAPK1/ERK2 and at Ser-298 by PAK. MAPK1/ERK2 phosphorylation of Thr-292 occurs in response to cellular adhesion and leads to inhibition of Ser-298 phosphorylation by PAK. Autophosphorylated at Ser-218 and Ser-222, autophosphosphorylation is promoted by NEK10 following UV irradiation.

It is found in the cytoplasm. It localises to the cytoskeleton. The protein resides in the microtubule organizing center. The protein localises to the centrosome. Its subcellular location is the spindle pole body. It is found in the nucleus. It localises to the membrane. It catalyses the reaction L-seryl-[protein] + ATP = O-phospho-L-seryl-[protein] + ADP + H(+). It carries out the reaction L-threonyl-[protein] + ATP = O-phospho-L-threonyl-[protein] + ADP + H(+). The enzyme catalyses L-tyrosyl-[protein] + ATP = O-phospho-L-tyrosyl-[protein] + ADP + H(+). Its activity is regulated as follows. Ras proteins such as HRAS mediate the activation of RAF proteins such as RAF1 or BRAF which in turn activate extracellular signal-regulated kinases (ERK) through MAPK (mitogen-activated protein kinases) and ERK kinases MAP2K1/MEK1 and MAP2K2/MEK2. Activation occurs through phosphorylation of Ser-218 and Ser-222. MAP2K1/MEK1 binds KSR1 or KSR2 releasing the inhibitory intramolecular interaction between KSR1 or KSR2 protein kinase and N-terminal domains. This allows KSR1 or KSR2 dimerization with BRAF leading to BRAF activation and phosphorylation of MAP2K1. MAP2K1/MEK1 is also the target of negative feed-back regulation by its substrate kinases, such as MAPK1/ERK2. These phosphorylate MAP2K1/MEK1 on Thr-292, thereby facilitating dephosphorylation of the activating residues Ser-218 and Ser-222. Inhibited by serine/threonine phosphatase 2A. In terms of biological role, dual specificity protein kinase which acts as an essential component of the MAP kinase signal transduction pathway. Binding of extracellular ligands such as growth factors, cytokines and hormones to their cell-surface receptors activates RAS and this initiates RAF1 activation. RAF1 then further activates the dual-specificity protein kinases MAP2K1/MEK1 and MAP2K2/MEK2. Both MAP2K1/MEK1 and MAP2K2/MEK2 function specifically in the MAPK/ERK cascade, and catalyze the concomitant phosphorylation of a threonine and a tyrosine residue in a Thr-Glu-Tyr sequence located in the extracellular signal-regulated kinases MAPK3/ERK1 and MAPK1/ERK2, leading to their activation and further transduction of the signal within the MAPK/ERK cascade. Activates BRAF in a KSR1 or KSR2-dependent manner; by binding to KSR1 or KSR2 releases the inhibitory intramolecular interaction between KSR1 or KSR2 protein kinase and N-terminal domains which promotes KSR1 or KSR2-BRAF dimerization and BRAF activation. Depending on the cellular context, this pathway mediates diverse biological functions such as cell growth, adhesion, survival and differentiation, predominantly through the regulation of transcription, metabolism and cytoskeletal rearrangements. One target of the MAPK/ERK cascade is peroxisome proliferator-activated receptor gamma (PPARG), a nuclear receptor that promotes differentiation and apoptosis. MAP2K1/MEK1 has been shown to export PPARG from the nucleus. The MAPK/ERK cascade is also involved in the regulation of endosomal dynamics, including lysosome processing and endosome cycling through the perinuclear recycling compartment (PNRC), as well as in the fragmentation of the Golgi apparatus during mitosis. In Mus musculus (Mouse), this protein is Dual specificity mitogen-activated protein kinase kinase 1 (Map2k1).